Reading from the N-terminus, the 235-residue chain is Thymidylate kinase (235 aa).

ATP is bound at residue 10–17 (GINGVEKS).

It belongs to the thymidylate kinase family.

The catalysed reaction is dTMP + ATP = dTDP + ADP. The protein operates within pyrimidine metabolism; dTTP biosynthesis. Its function is as follows. Catalyzes the conversion of dTMP to dTDP. The sequence is that of Thymidylate kinase (TMK) from African swine fever virus (isolate Pig/Kenya/KEN-50/1950) (ASFV).